We begin with the raw amino-acid sequence, 372 residues long: Mannan endo-1,4-beta-mannosidase 8 (372 aa).

Positions 57 and 172 each coordinate substrate. Glu-173 acts as the Proton donor in catalysis. Tyr-253 lines the substrate pocket. Residue Glu-293 is the Nucleophile of the active site. Trp-335 is a substrate binding site.

It belongs to the glycosyl hydrolase 5 (cellulase A) family. Expressed in stems and leaves and seeds.

It carries out the reaction Random hydrolysis of (1-&gt;4)-beta-D-mannosidic linkages in mannans, galactomannans and glucomannans.. This chain is Mannan endo-1,4-beta-mannosidase 8 (MAN8), found in Oryza sativa subsp. japonica (Rice).